Consider the following 126-residue polypeptide: MLSRLLKCKIHRAVVTHAELHYEGSCAIDGVLMDLAGIREYEEIHVWNVTNGKRFTTYAIRGEDNSGIISVNGGAAHQADVGDLVIIATFGDFTEAEANVHKPRLVYANPDNTVNHTANCIPVQVA.

Serine 25 serves as the catalytic Schiff-base intermediate with substrate; via pyruvic acid. At serine 25 the chain carries Pyruvic acid (Ser). Threonine 57 provides a ligand contact to substrate. Tyrosine 58 functions as the Proton donor in the catalytic mechanism. Glycine 73 to alanine 75 provides a ligand contact to substrate.

This sequence belongs to the PanD family. In terms of assembly, heterooctamer of four alpha and four beta subunits. The cofactor is pyruvate. Post-translationally, is synthesized initially as an inactive proenzyme, which is activated by self-cleavage at a specific serine bond to produce a beta-subunit with a hydroxyl group at its C-terminus and an alpha-subunit with a pyruvoyl group at its N-terminus.

It localises to the cytoplasm. It carries out the reaction L-aspartate + H(+) = beta-alanine + CO2. Its pathway is cofactor biosynthesis; (R)-pantothenate biosynthesis; beta-alanine from L-aspartate: step 1/1. Its function is as follows. Catalyzes the pyruvoyl-dependent decarboxylation of aspartate to produce beta-alanine. This Acinetobacter baumannii (strain AB307-0294) protein is Aspartate 1-decarboxylase.